Reading from the N-terminus, the 194-residue chain is Xanthine phosphoribosyltransferase (194 aa).

Residues Leu20 and Asn27 each coordinate xanthine. 128–132 contacts 5-phospho-alpha-D-ribose 1-diphosphate; that stretch reads ANGQA. Residue Lys156 coordinates xanthine.

It belongs to the purine/pyrimidine phosphoribosyltransferase family. Xpt subfamily. As to quaternary structure, homodimer.

It localises to the cytoplasm. The enzyme catalyses XMP + diphosphate = xanthine + 5-phospho-alpha-D-ribose 1-diphosphate. The protein operates within purine metabolism; XMP biosynthesis via salvage pathway; XMP from xanthine: step 1/1. Functionally, converts the preformed base xanthine, a product of nucleic acid breakdown, to xanthosine 5'-monophosphate (XMP), so it can be reused for RNA or DNA synthesis. The chain is Xanthine phosphoribosyltransferase from Oceanobacillus iheyensis (strain DSM 14371 / CIP 107618 / JCM 11309 / KCTC 3954 / HTE831).